A 72-amino-acid chain; its full sequence is Translation initiation factor IF-1 (72 aa).

The S1-like domain occupies 1–72 (MSKDDVIEMQ…TRGRITWRAK (72 aa)).

Belongs to the IF-1 family. In terms of assembly, component of the 30S ribosomal translation pre-initiation complex which assembles on the 30S ribosome in the order IF-2 and IF-3, IF-1 and N-formylmethionyl-tRNA(fMet); mRNA recruitment can occur at any time during PIC assembly.

It localises to the cytoplasm. In terms of biological role, one of the essential components for the initiation of protein synthesis. Stabilizes the binding of IF-2 and IF-3 on the 30S subunit to which N-formylmethionyl-tRNA(fMet) subsequently binds. Helps modulate mRNA selection, yielding the 30S pre-initiation complex (PIC). Upon addition of the 50S ribosomal subunit IF-1, IF-2 and IF-3 are released leaving the mature 70S translation initiation complex. The chain is Translation initiation factor IF-1 from Clostridium beijerinckii (strain ATCC 51743 / NCIMB 8052) (Clostridium acetobutylicum).